The primary structure comprises 536 residues: MFS-type efflux pump MFS1 (536 aa).

A run of 3 helical transmembrane segments spans residues 30 to 50 (VTGL…LLVA), 80 to 100 (YLLT…FFPV), and 102 to 122 (WVFL…GAAP). Residue Asn-123 is glycosylated (N-linked (GlcNAc...) asparagine). The next 3 helical transmembrane spans lie at 133-153 (VAGI…AYSI), 163-183 (GAIG…GGAF), and 191-211 (WCFY…LIFL). Asn-221 is a glycosylation site (N-linked (GlcNAc...) asparagine). 8 consecutive transmembrane segments (helical) span residues 234–254 (IGTA…QWGG), 264–284 (IIAL…FQIR), 306–326 (FFLF…PIWF), 342–362 (IPMV…VTAI), 366–386 (APLY…LTTF), 400–420 (IIFG…AQAV), 426–446 (VAVG…LFVS), and 503–523 (TWYV…GMEW).

The protein belongs to the major facilitator superfamily. TCR/Tet family.

It is found in the cell membrane. In terms of biological role, MFS-type efflux pump involved in the modulation susceptibility to azoles, including fluconazole, itraconazole, ketoconazole, miconazole and voriconazole. Confers also increased resistance chloramphenicol and thiamphenicol, suggesting that it acts as a pleiotropic drug transporter with a broad substrate spectrum. Finally, increases the tolerance to cycloheximide when expressed in S.cerevisiae, but not in dermatophyte species. The polypeptide is MFS-type efflux pump MFS1 (Trichophyton rubrum (strain ATCC MYA-4607 / CBS 118892) (Athlete's foot fungus)).